A 353-amino-acid polypeptide reads, in one-letter code: BLOC-1-related complex subunit 6 (353 aa).

The disordered stretch occupies residues 23–194; the sequence is AIFGDGPGQT…SGAGGGRRAT (172 aa). Residues 102–126 are compositionally biased toward basic and acidic residues; it reads FDLHGSSRRKDPEPPEAKPESERVC. Ser130 and Ser166 each carry phosphoserine. The segment covering 172-191 has biased composition (gly residues); the sequence is GACGGPASSGGAESGAGGGR. Position 194 is a phosphothreonine (Thr194). A Phosphoserine modification is found at Ser197. The segment at 225–253 is disordered; that stretch reads LSGAPQPPPPAPTRPCSAPTPTPAIPPID. The span at 229-253 shows a compositional bias: pro residues; the sequence is PQPPPPAPTRPCSAPTPTPAIPPID.

The protein belongs to the BORCS6 family. Component of the BLOC-one-related complex (BORC) which is composed of BLOC1S1, BLOC1S2, BORCS5, BORCS6, BORCS7, BORCS8, KXD1 and SNAPIN.

The protein localises to the lysosome membrane. Functionally, as part of the BORC complex may play a role in lysosomes movement and localization at the cell periphery. Associated with the cytosolic face of lysosomes, the BORC complex may recruit ARL8B and couple lysosomes to microtubule plus-end-directed kinesin motor. This Bos taurus (Bovine) protein is BLOC-1-related complex subunit 6.